The following is a 465-amino-acid chain: ATP-dependent protease ATPase subunit HslU (465 aa).

Residues valine 20, 62-67, aspartate 277, glutamate 343, and arginine 415 contribute to the ATP site; that span reads GVGKTE.

It belongs to the ClpX chaperone family. HslU subfamily. A double ring-shaped homohexamer of HslV is capped on each side by a ring-shaped HslU homohexamer. The assembly of the HslU/HslV complex is dependent on binding of ATP.

The protein localises to the cytoplasm. In terms of biological role, ATPase subunit of a proteasome-like degradation complex; this subunit has chaperone activity. The binding of ATP and its subsequent hydrolysis by HslU are essential for unfolding of protein substrates subsequently hydrolyzed by HslV. HslU recognizes the N-terminal part of its protein substrates and unfolds these before they are guided to HslV for hydrolysis. In Geobacillus kaustophilus (strain HTA426), this protein is ATP-dependent protease ATPase subunit HslU.